The sequence spans 265 residues: Diphthine synthase (265 aa).

S-adenosyl-L-methionine is bound by residues leucine 9, aspartate 85, isoleucine 88, 113–114, leucine 168, alanine 211, and histidine 236; that span reads TA.

The protein belongs to the diphthine synthase family. In terms of assembly, homodimer.

The catalysed reaction is 2-[(3S)-amino-3-carboxypropyl]-L-histidyl-[translation elongation factor 2] + 3 S-adenosyl-L-methionine = diphthine-[translation elongation factor 2] + 3 S-adenosyl-L-homocysteine + 3 H(+). The protein operates within protein modification; peptidyl-diphthamide biosynthesis. Functionally, S-adenosyl-L-methionine-dependent methyltransferase that catalyzes the trimethylation of the amino group of the modified target histidine residue in translation elongation factor 2 (EF-2), to form an intermediate called diphthine. The three successive methylation reactions represent the second step of diphthamide biosynthesis. The protein is Diphthine synthase of Halorubrum lacusprofundi (strain ATCC 49239 / DSM 5036 / JCM 8891 / ACAM 34).